Here is a 437-residue protein sequence, read N- to C-terminus: Cobyrinate a,c-diamide synthase (437 aa).

One can recognise a GATase cobBQ-type domain in the interval 241-430 (KIAVAKDEAF…AHVHFFGNLD (190 aa)). Cys323 serves as the catalytic Nucleophile.

It belongs to the CobB/CbiA family. Mg(2+) serves as cofactor.

The catalysed reaction is cob(II)yrinate + 2 L-glutamine + 2 ATP + 2 H2O = cob(II)yrinate a,c diamide + 2 L-glutamate + 2 ADP + 2 phosphate + 2 H(+). It participates in cofactor biosynthesis; adenosylcobalamin biosynthesis; cob(II)yrinate a,c-diamide from sirohydrochlorin (anaerobic route): step 10/10. In terms of biological role, catalyzes the ATP-dependent amidation of the two carboxylate groups at positions a and c of cobyrinate, using either L-glutamine or ammonia as the nitrogen source. This is Cobyrinate a,c-diamide synthase from Clostridium acetobutylicum (strain ATCC 824 / DSM 792 / JCM 1419 / IAM 19013 / LMG 5710 / NBRC 13948 / NRRL B-527 / VKM B-1787 / 2291 / W).